The chain runs to 305 residues: Membrane glycoprotein UL142 (305 aa).

The N-terminal stretch at 1–19 is a signal peptide; it reads MRIEWACWLFGYFVSSVGS. The Lumenal segment spans residues 20 to 270; that stretch reads ERSLSYRYHL…QKTNNTTSPW (251 aa). The chain crosses the membrane as a helical span at residues 271 to 288; it reads VYAIPMGATATIGAGLYI. The Cytoplasmic segment spans residues 289–305; the sequence is GKHFTPVKFVYEVWRGQ.

As to quaternary structure, interacts with host MICA and ULBP3.

It is found in the host endoplasmic reticulum membrane. Its subcellular location is the host Golgi apparatus membrane. Participates in the inhibition of the host immune response. Prevents host NK cell-mediated lysis of the infected cell by preventing the KLRK1 ligand 3/ULBP3 trafficking to the cell surface. Also retains another KLRK1 ligand, MHC class I-related chain A/MICA, in the Golgi apparatus to avoid its surface expression. This Homo sapiens (Human) protein is Membrane glycoprotein UL142 (UL142).